The following is a 142-amino-acid chain: Large ribosomal subunit protein uL13 (142 aa).

Belongs to the universal ribosomal protein uL13 family. In terms of assembly, part of the 50S ribosomal subunit.

In terms of biological role, this protein is one of the early assembly proteins of the 50S ribosomal subunit, although it is not seen to bind rRNA by itself. It is important during the early stages of 50S assembly. The sequence is that of Large ribosomal subunit protein uL13 from Pseudomonas entomophila (strain L48).